Here is a 212-residue protein sequence, read N- to C-terminus: Probable nicotinate-nucleotide adenylyltransferase (212 aa).

The protein belongs to the NadD family.

The enzyme catalyses nicotinate beta-D-ribonucleotide + ATP + H(+) = deamido-NAD(+) + diphosphate. It participates in cofactor biosynthesis; NAD(+) biosynthesis; deamido-NAD(+) from nicotinate D-ribonucleotide: step 1/1. Functionally, catalyzes the reversible adenylation of nicotinate mononucleotide (NaMN) to nicotinic acid adenine dinucleotide (NaAD). The polypeptide is Probable nicotinate-nucleotide adenylyltransferase (Methylibium petroleiphilum (strain ATCC BAA-1232 / LMG 22953 / PM1)).